Here is a 297-residue protein sequence, read N- to C-terminus: Small ribosomal subunit biogenesis GTPase RsgA (297 aa).

A CP-type G domain is found at 65-223 (TNEIGRPAVA…IADTPGFSAI (159 aa)). GTP is bound by residues 114-117 (SKAD) and 166-174 (GQSGAGKST). 4 residues coordinate Zn(2+): cysteine 247, cysteine 252, histidine 254, and cysteine 260.

It belongs to the TRAFAC class YlqF/YawG GTPase family. RsgA subfamily. Monomer. Associates with 30S ribosomal subunit, binds 16S rRNA. It depends on Zn(2+) as a cofactor.

Its subcellular location is the cytoplasm. Functionally, one of several proteins that assist in the late maturation steps of the functional core of the 30S ribosomal subunit. Helps release RbfA from mature subunits. May play a role in the assembly of ribosomal proteins into the subunit. Circularly permuted GTPase that catalyzes slow GTP hydrolysis, GTPase activity is stimulated by the 30S ribosomal subunit. This Lactobacillus gasseri (strain ATCC 33323 / DSM 20243 / BCRC 14619 / CIP 102991 / JCM 1131 / KCTC 3163 / NCIMB 11718 / NCTC 13722 / AM63) protein is Small ribosomal subunit biogenesis GTPase RsgA.